The chain runs to 217 residues: MEIERINEDTIKFYISYLDLEERGFNQEDVWYDREKSEELFWDMMDELKYEEEFSPEGPLWIQVQALKHGLEVFVTKATIGGKGEDGFDVTLSSPDELAEEKIEKLLEENFNPVKKEALGEDDTLEFILEFRDFEDAISLSRATGLENLVTKLYSYQGKYYLNVEFPENKYDESNIDNAVSILLEYGLESNLTGYMLAEYGKVIFDVPALKQIRKHF.

The protein belongs to the MecA family. In terms of assembly, homodimer.

Its function is as follows. Enables the recognition and targeting of unfolded and aggregated proteins to the ClpC protease or to other proteins involved in proteolysis. The chain is Adapter protein MecA from Listeria monocytogenes serovar 1/2a (strain ATCC BAA-679 / EGD-e).